The primary structure comprises 301 residues: Homoserine kinase (301 aa).

89–99 (KPGSGLGSSSA) is a binding site for ATP.

The protein belongs to the GHMP kinase family. Homoserine kinase subfamily.

The protein localises to the cytoplasm. It catalyses the reaction L-homoserine + ATP = O-phospho-L-homoserine + ADP + H(+). It participates in amino-acid biosynthesis; L-threonine biosynthesis; L-threonine from L-aspartate: step 4/5. Functionally, catalyzes the ATP-dependent phosphorylation of L-homoserine to L-homoserine phosphate. In Methanococcus maripaludis (strain DSM 14266 / JCM 13030 / NBRC 101832 / S2 / LL), this protein is Homoserine kinase.